Here is a 123-residue protein sequence, read N- to C-terminus: UPF0231 protein plu3616 (123 aa).

Belongs to the UPF0231 family.

The chain is UPF0231 protein plu3616 from Photorhabdus laumondii subsp. laumondii (strain DSM 15139 / CIP 105565 / TT01) (Photorhabdus luminescens subsp. laumondii).